Consider the following 730-residue polypeptide: Catalase-peroxidase (730 aa).

The tryptophyl-tyrosyl-methioninium (Trp-Tyr) (with M-251) cross-link spans 92-225 (WHSAGTYRSI…LSAVHMGLIY (134 aa)). His-93 serves as the catalytic Proton acceptor. Positions 225–251 (YVNPEGPDGIPDPVASARDIRTTFRRM) form a cross-link, tryptophyl-tyrosyl-methioninium (Tyr-Met) (with W-92). Residue His-266 participates in heme b binding.

It belongs to the peroxidase family. Peroxidase/catalase subfamily. As to quaternary structure, homodimer or homotetramer. Heme b serves as cofactor. Formation of the three residue Trp-Tyr-Met cross-link is important for the catalase, but not the peroxidase activity of the enzyme.

It localises to the cytoplasm. It carries out the reaction H2O2 + AH2 = A + 2 H2O. It catalyses the reaction 2 H2O2 = O2 + 2 H2O. Functionally, bifunctional enzyme with both catalase and broad-spectrum peroxidase activity. This chain is Catalase-peroxidase, found in Blumeria hordei (Barley powdery mildew).